Here is a 143-residue protein sequence, read N- to C-terminus: MLMLRSPYSDSNALDHFLDELTGSVQFPYWRNADHNSFNFSDNIGEIVNDESKFSVQLDVSHFKPENLKIKLDGRELKIEGIQETKSEHGYLKRSFSKMILLPEDADLPSVKSAISNEGKLQIEAPKKTNSSRSIPINFVAKH.

The 106-residue stretch at 35–140 folds into the sHSP domain; that stretch reads HNSFNFSDNI…SSRSIPINFV (106 aa).

It belongs to the small heat shock protein (HSP20) family.

The protein is Heat shock protein Hsp-16.41 (hsp-16.41) of Caenorhabditis elegans.